We begin with the raw amino-acid sequence, 315 residues long: tRNA-cytidine(32) 2-sulfurtransferase (315 aa).

The short motif at 39–44 (SGGKDS) is the PP-loop motif element. [4Fe-4S] cluster-binding residues include cysteine 114, cysteine 117, and cysteine 205.

It belongs to the TtcA family. In terms of assembly, homodimer. It depends on Mg(2+) as a cofactor. [4Fe-4S] cluster serves as cofactor.

The protein resides in the cytoplasm. It carries out the reaction cytidine(32) in tRNA + S-sulfanyl-L-cysteinyl-[cysteine desulfurase] + AH2 + ATP = 2-thiocytidine(32) in tRNA + L-cysteinyl-[cysteine desulfurase] + A + AMP + diphosphate + H(+). Its pathway is tRNA modification. Its function is as follows. Catalyzes the ATP-dependent 2-thiolation of cytidine in position 32 of tRNA, to form 2-thiocytidine (s(2)C32). The sulfur atoms are provided by the cysteine/cysteine desulfurase (IscS) system. The protein is tRNA-cytidine(32) 2-sulfurtransferase of Ralstonia pickettii (strain 12J).